A 482-amino-acid chain; its full sequence is tRNA sulfurtransferase (482 aa).

One can recognise a THUMP domain in the interval 61-165 (AEVLEILTHT…GDKLNQVLAR (105 aa)). Residues 183–184 (LI), lysine 265, glycine 287, and glutamine 296 each bind ATP. An intrachain disulfide couples cysteine 344 to cysteine 456. One can recognise a Rhodanese domain in the interval 404 to 482 (VEEHAVVLDI…GFNNVKVYRP (79 aa)). Catalysis depends on cysteine 456, which acts as the Cysteine persulfide intermediate.

Belongs to the ThiI family.

The protein localises to the cytoplasm. It carries out the reaction [ThiI sulfur-carrier protein]-S-sulfanyl-L-cysteine + a uridine in tRNA + 2 reduced [2Fe-2S]-[ferredoxin] + ATP + H(+) = [ThiI sulfur-carrier protein]-L-cysteine + a 4-thiouridine in tRNA + 2 oxidized [2Fe-2S]-[ferredoxin] + AMP + diphosphate. The catalysed reaction is [ThiS sulfur-carrier protein]-C-terminal Gly-Gly-AMP + S-sulfanyl-L-cysteinyl-[cysteine desulfurase] + AH2 = [ThiS sulfur-carrier protein]-C-terminal-Gly-aminoethanethioate + L-cysteinyl-[cysteine desulfurase] + A + AMP + 2 H(+). The protein operates within cofactor biosynthesis; thiamine diphosphate biosynthesis. Its function is as follows. Catalyzes the ATP-dependent transfer of a sulfur to tRNA to produce 4-thiouridine in position 8 of tRNAs, which functions as a near-UV photosensor. Also catalyzes the transfer of sulfur to the sulfur carrier protein ThiS, forming ThiS-thiocarboxylate. This is a step in the synthesis of thiazole, in the thiamine biosynthesis pathway. The sulfur is donated as persulfide by IscS. In Vibrio parahaemolyticus serotype O3:K6 (strain RIMD 2210633), this protein is tRNA sulfurtransferase.